Reading from the N-terminus, the 1392-residue chain is ENHANCER OF AG-4 protein 2 (1392 aa).

In terms of domain architecture, PWWP spans 20-77; sequence LGDLVLAKVKGFPAWPAKISRPEDWDRAPDPKKYFVQFFGTEEIAFVAPPDIQAFTSE. The span at 184-194 shows a compositional bias: polar residues; it reads ESKVKTTSPVS. Disordered regions lie at residues 184–354, 384–428, 575–613, and 723–766; these read ESKV…STGT, KRQR…PAAQ, KKPQ…GERL, and QGHH…GGSL. Basic and acidic residues-rich tracts occupy residues 196–215, 239–258, and 311–345; these read SLEH…DKGT, KEAG…DKSN, and LESE…KCEI. Positions 391–400 are enriched in polar residues; that stretch reads EHATSPSFSG. Positions 401–417 are enriched in basic and acidic residues; sequence SRDKSGKGHLEQKDRSS. Polar residues-rich tracts occupy residues 591-601 and 725-744; these read KISSSQSQPAN and HHQQ…SRNQ. The region spanning 771–912 is the CID domain; sequence EAAISRDAFE…RYIDDIRASG (142 aa). Disordered stretches follow at residues 957-986, 1014-1356, and 1369-1392; these read FFSS…AGER, LEME…NYQP, and PGHT…WRPA. Over residues 1059–1129 the composition is skewed to pro residues; the sequence is EDSPPLPQES…SPPPPPPPPS (71 aa). The segment covering 1157–1175 has biased composition (polar residues); it reads LSHQTYPGSMQQDRSSIFT. Residues 1215–1225 show a composition bias toward low complexity; the sequence is SSREPSSFTSS. 2 stretches are compositionally biased toward polar residues: residues 1240-1255 and 1265-1284; these read EASS…TPLS and APSS…QHSY. Residues 1293–1306 show a composition bias toward basic and acidic residues; it reads QRDDARRYRNEEPW. Residues 1311–1320 show a composition bias toward polar residues; the sequence is SGHSAENQNG.

As to expression, expressed in the inflorescence meristem, floral primordia, inflorescence stem, and floral pedicels. Also detected in the shoot apical meristem, stems, leaves, embryos, and roots.

It is found in the nucleus. Functionally, transcription factor that functions as a repressor of flowering by enhancing the expression of several genes that delay flowering including FLC, FLM/MAF1, MAF2 and SVP. Also acts in the floral homeotic AGAMOUS (AG) pathway, specifically by processing the AGAMOUS pre-mRNA. Functions in association with HUA1 and HEN4 in AG pre-mRNA processing. Involved in all three aspects of the AG functions, the specification of stamen and carpel identities, the control of floral determinacy, and the spatial restriction of AP1 expression. Acts as a transcription regulator that controls anthocyanin accumulation. This chain is ENHANCER OF AG-4 protein 2, found in Arabidopsis thaliana (Mouse-ear cress).